The chain runs to 610 residues: Elongation factor 4 (610 aa).

The tr-type G domain occupies 12 to 194 (EKIRNFSIIA…QIVEKVPAPQ (183 aa)). Residues 24–29 (DHGKST) and 141–144 (NKID) each bind GTP.

Belongs to the TRAFAC class translation factor GTPase superfamily. Classic translation factor GTPase family. LepA subfamily.

It is found in the cell membrane. It carries out the reaction GTP + H2O = GDP + phosphate + H(+). Its function is as follows. Required for accurate and efficient protein synthesis under certain stress conditions. May act as a fidelity factor of the translation reaction, by catalyzing a one-codon backward translocation of tRNAs on improperly translocated ribosomes. Back-translocation proceeds from a post-translocation (POST) complex to a pre-translocation (PRE) complex, thus giving elongation factor G a second chance to translocate the tRNAs correctly. Binds to ribosomes in a GTP-dependent manner. In Streptococcus thermophilus (strain CNRZ 1066), this protein is Elongation factor 4.